The chain runs to 388 residues: MDTKGSLADKIDIFFLLKQQKLITKKELGMLLPTQSYEDYRVNYYRRRVPEVFDRNFRKEWFIYRYLDDFFCEERRKAIWNIYSFKIEGPCIIARNISDDVPGSVINSAFSQCVNLERFWIQHQTSQNGFSRLCYIILKKEASVQESIDFMRSVLDRKLGIELEEFDISGVVEPKILSDCNDYDTAMSIFSSMCRMFDINEEEVLKKYSSALGDTSTRQNTAEFICNALKNVFLYCYTCAHQYDDPLEMMMGCRNHKTTDAAARRREFLSSHQEFGYLDVKTKEEELNNMTTIVNENHYKCGFCGKAFESEKFIFNHFNNKHENEIRRIEKGIENFKKFICRIDCFVLGIIEGTDDDRIPKFILPNIKDDRVVYDMGAVFSGEIAIGK.

A C2H2-type zinc finger spans residues 299 to 322; that stretch reads YKCGFCGKAFESEKFIFNHFNNKH.

This is Zinc finger C2H2 protein ECU10_0150 from Encephalitozoon cuniculi (strain GB-M1) (Microsporidian parasite).